We begin with the raw amino-acid sequence, 985 residues long: Ephrin type-A receptor 4-B (985 aa).

The signal sequence occupies residues 1 to 20; sequence MAGIVHGILFCGLFGLCWAV. Residues 21–547 are Extracellular-facing; sequence TGSRIYPASE…MIGEGTSPTV (527 aa). Positions 30–209 constitute an Eph LBD domain; the sequence is EVTLLDSRSV…FYKKCPLTVR (180 aa). Fibronectin type-III domains are found at residues 328 to 438 and 439 to 536; these read PPSA…TNQA and APST…TVPS. Residues N340 and N407 are each glycosylated (N-linked (GlcNAc...) asparagine). A helical transmembrane segment spans residues 548–569; it reads LLVSVAGSIVLVVILIAAFVIS. At 570–985 the chain is on the cytoplasmic side; that stretch reads RRRSKYSKAK…QQMQGRMVPV (416 aa). Phosphotyrosine; by autocatalysis is present on residues Y595 and Y601. Positions 620-881 constitute a Protein kinase domain; it reads IKIEKVIGVG…QIVSMLDKLI (262 aa). ATP is bound by residues 626–634 and K652; that span reads IGVGEFGEV. D745 acts as the Proton acceptor in catalysis. Phosphotyrosine; by autocatalysis is present on residues Y778 and Y927. One can recognise an SAM domain in the interval 910 to 974; that stretch reads SQVASVLDWL…LSSVQGMRTQ (65 aa). Residues 983–985 carry the PDZ-binding motif; it reads VPV.

The protein belongs to the protein kinase superfamily. Tyr protein kinase family. Ephrin receptor subfamily. In terms of tissue distribution, localized expression in a subset of neural crest and neural tissues in embryos.

The protein localises to the cell membrane. Its subcellular location is the early endosome. It carries out the reaction L-tyrosyl-[protein] + ATP = O-phospho-L-tyrosyl-[protein] + ADP + H(+). Its function is as follows. Receptor tyrosine kinase which binds membrane-bound ephrin family ligands residing on adjacent cells, leading to contact-dependent bidirectional signaling into neighboring cells. The signaling pathway downstream of the receptor is referred to as forward signaling while the signaling pathway downstream of the ephrin ligand is referred to as reverse signaling. Highly promiscuous, it has the unique property among Eph receptors to bind and to be physiologically activated by both GPI-anchored ephrin-A and transmembrane ephrin-B ligands including EFNA1 and EFNB3. Upon activation by ephrin ligands, modulates cell morphology and integrin-dependent cell adhesion through regulation of the Rac, Rap and Rho GTPases activity. Plays an important role in the development of the nervous system controlling different steps of axonal guidance including the establishment of the corticospinal projections. This is Ephrin type-A receptor 4-B (epha4-b) from Xenopus laevis (African clawed frog).